The sequence spans 212 residues: Probable nicotinate-nucleotide adenylyltransferase (212 aa).

This sequence belongs to the NadD family.

The catalysed reaction is nicotinate beta-D-ribonucleotide + ATP + H(+) = deamido-NAD(+) + diphosphate. The protein operates within cofactor biosynthesis; NAD(+) biosynthesis; deamido-NAD(+) from nicotinate D-ribonucleotide: step 1/1. Catalyzes the reversible adenylation of nicotinate mononucleotide (NaMN) to nicotinic acid adenine dinucleotide (NaAD). The chain is Probable nicotinate-nucleotide adenylyltransferase from Saccharopolyspora erythraea (strain ATCC 11635 / DSM 40517 / JCM 4748 / NBRC 13426 / NCIMB 8594 / NRRL 2338).